The primary structure comprises 281 residues: Nuclear transcription factor Y subunit nfya-2 (281 aa).

Disordered stretches follow at residues 1-27 (MNPRGNPSKMPTQIVLNRRPAAPARPQ) and 163-261 (REMR…VQEE). Positions 150 to 173 (MVNPRQYKRIIKRREMRQKMEDSG) match the Subunit association domain (SAD) motif. The segment covering 166 to 188 (RQKMEDSGRLPLERQKYMHESRR) has biased composition (basic and acidic residues). Residues 180-204 (QKYMHESRRQHALKRRRTGGRFDAN) constitute a DNA-binding region (NFYA/HAP2-type). Positions 189–198 (QHALKRRRTG) are enriched in basic residues. Residues 204 to 220 (NAEAAAASSEPSISSAA) are compositionally biased toward low complexity.

Belongs to the NFYA/HAP2 subunit family. In terms of assembly, forms a heterotrimeric transcription factor complex (nfya-2-NF-Y complex) composed of nfya-2, nfyb-1 and nfyc-1. Interacts with the nfyb-1 and nfyc-1 dimer; the interaction is required for subsequent binding to the 5'-CCAAT-3' box motif in DNA. Does not interact with either nfyb-1 or nfyc-1 in their monomeric form. In terms of tissue distribution, highly expressed in certain parts of the gonads. Expressed in the spermatheca, intestine and in some neurons in the head. Not expressed in the intestine, the hypodermis, body wall muscle surrounding the pseudocoelomic space, secretory cells in the pharyngeal terminal bulb wall, in the small ganglia surrounding the pharynx and in the neurons running anteriorly to the sensory organs in the head.

Its subcellular location is the nucleus. Functionally, component of the sequence-specific heterotrimeric transcription factor (nfya-2-NF-Y) which specifically recognizes a 5'-CCAAT-3' box motif found in the promoters of its target genes to regulate their expression and control cellular identity in particular tissue types. In association with the components in the nfya-2-NF-Y complex, may repress the expression of the T-box transcription factor tbx-2 throughout larval development, which most likely restricts its expression to certain tissues. In Caenorhabditis elegans, this protein is Nuclear transcription factor Y subunit nfya-2.